Consider the following 405-residue polypeptide: MVLAAPLLLGFLLLALELRPRGEAAEGPAAAAAAAAAAAGVGGERSSRPAPSAAPEPDGCPVCVWRQHSRELRLESIKSQILSKLRLKEAPNISREVVKQLLPKAPPLQQILDLHDFQGDALQPEDFLEEDEYHATTETVISMAQETDPAVQTDGSPLCCHFHFSPKVMFTKVLKAQLWVYLRPVPRPATVYLQILRLKPLTGEGTAGGGGGGRRHIRIRSLKIELHSRSGHWQSIDFKQVLHSWFRQPQSNWGIEINAFDPSGTDLAVTSLGPGAEGLHPFMELRVLENTKRSRRNLGLDCDEHSSESRCCRYPLTVDFEAFGWDWIIAPKRYKANYCSGQCEYMFMQKYPHTHLVQQANPRGSAGPCCTPTKMSPINMLYFNDKQQIIYGKIPGMVVDRCGCS.

Residues 1 to 24 (MVLAAPLLLGFLLLALELRPRGEA) form the signal peptide. The propeptide occupies 25–296 (AEGPAAAAAA…VLENTKRSRR (272 aa)). A glycan (N-linked (GlcNAc...) asparagine) is linked at Asn92. Disulfide bonds link Cys302/Cys312, Cys311/Cys370, Cys339/Cys402, and Cys343/Cys404.

This sequence belongs to the TGF-beta family. As to quaternary structure, homodimer; disulfide-linked. Interacts directly with ACVR2B. Interacts directly with ACVR2A. Interacts with ACVR1B, TGFBR1 and ACVR1C in an ACVR2B-dependent manner. Interacts with FST isoform 2/FS288. Post-translationally, synthesized as large precursor molecule that undergoes proteolytic cleavage by furin-like proteases. This produces an inactive form consisting of the mature C-terminal portion non-covalently bound to its cleaved N-terminal propeptide. Activation of the mature form requires additional cleavage of the propeptide by a tolloid-like metalloproteinase.

Its subcellular location is the secreted. In terms of biological role, secreted signal that acts globally to regulate anterior/posterior axial patterning during development. May play critical roles in patterning both mesodermal and neural tissues. It is required for proper vertebral patterning and orofacial development. Signals through activin receptors type-2, ACVR2A and ACVR2B, and activin receptors type-1, ACVR1B, ACVR1C and TGFBR1 leading to the phosphorylation of SMAD2 and SMAD3. The protein is Growth/differentiation factor 11 (Gdf11) of Rattus norvegicus (Rat).